An 880-amino-acid polypeptide reads, in one-letter code: Protein translocase subunit SecA (880 aa).

Residues Q86, 104–108, and D511 each bind ATP; that span reads GEGKT. Residues 837–871 are disordered; the sequence is AQKIQRSDGDGARRPVEKPKKIGRNDPCPCGSGKK. Residues 841–860 are compositionally biased toward basic and acidic residues; that stretch reads QRSDGDGARRPVEKPKKIGR. Zn(2+) contacts are provided by C864, C866, C875, and C876.

Belongs to the SecA family. In terms of assembly, monomer and homodimer. Part of the essential Sec protein translocation apparatus which comprises SecA, SecYEG and auxiliary proteins SecDF. Other proteins may also be involved. Zn(2+) is required as a cofactor.

It localises to the cell inner membrane. The protein resides in the cytoplasm. The enzyme catalyses ATP + H2O + cellular proteinSide 1 = ADP + phosphate + cellular proteinSide 2.. Part of the Sec protein translocase complex. Interacts with the SecYEG preprotein conducting channel. Has a central role in coupling the hydrolysis of ATP to the transfer of proteins into and across the cell membrane, serving as an ATP-driven molecular motor driving the stepwise translocation of polypeptide chains across the membrane. This Thermodesulfovibrio yellowstonii (strain ATCC 51303 / DSM 11347 / YP87) protein is Protein translocase subunit SecA.